The following is a 194-amino-acid chain: Imidazoleglycerol-phosphate dehydratase (194 aa).

This sequence belongs to the imidazoleglycerol-phosphate dehydratase family.

The protein localises to the cytoplasm. It catalyses the reaction D-erythro-1-(imidazol-4-yl)glycerol 3-phosphate = 3-(imidazol-4-yl)-2-oxopropyl phosphate + H2O. The protein operates within amino-acid biosynthesis; L-histidine biosynthesis; L-histidine from 5-phospho-alpha-D-ribose 1-diphosphate: step 6/9. The polypeptide is Imidazoleglycerol-phosphate dehydratase (Bacillus pumilus (strain SAFR-032)).